Consider the following 626-residue polypeptide: MGKIRKLDDQLSNLIAAGEVVERPASVVKELVENSIDANSTSIEIHLEEAGLSKIRIIDNGDGIAEEDCIVAFERHATSKIKDENDLFRIRTLGFRGEALPSIASVSELELITSTGDAPGTHLIIKGGDIIKQEKTASRKGTDITVQNLFFNTPARLKYMKTIHTELGNITDIVYRIAMSHPEVSLKLFHNEKKLLHTSGNGDVRQVLASIYSIQVAKKLVPIEAESLDFTIKGYVTLPEVTRASRNYMSTIVNGRYVRNFVLMKAIQQGYHTLLPVGRYPIGFLSIEMDPMLVDVNVHPAKLEVRFSKEQELLKLIEETLQAAFKKIQLIPDAGVTTKKKEKDESVQEQFQFEHAKPKEPSMPEIVLPTGMDEKQEEPQAVKQPTQLWQPSTKPIIEEPIQEEKSWDSNEEGFELEELEEVREIKEIEMNGNDLPPLYPIGQMHGTYIFAQNDKGLYMIDQHAAQERINYEYFRDKVGRVAQEVQELLVPYRIDLSLTEFLRVEEQLEELKKVGLFLEQFGHQSFIVRSHPTWFPKGQETEIIDEMMEQVVKLKKVDIKKLREEAAIMMSCKASIKANQYLTNDQIFALLEELRTTTNPYTCPHGRPILVHHSTYELEKMFKRVM.

A disordered region spans residues 377–413 (EEPQAVKQPTQLWQPSTKPIIEEPIQEEKSWDSNEEG). Over residues 383–393 (KQPTQLWQPST) the composition is skewed to polar residues.

This sequence belongs to the DNA mismatch repair MutL/HexB family.

This protein is involved in the repair of mismatches in DNA. It is required for dam-dependent methyl-directed DNA mismatch repair. May act as a 'molecular matchmaker', a protein that promotes the formation of a stable complex between two or more DNA-binding proteins in an ATP-dependent manner without itself being part of a final effector complex. The protein is DNA mismatch repair protein MutL of Bacillus anthracis (strain A0248).